Here is a 214-residue protein sequence, read N- to C-terminus: Alkaline phosphatase-like protein (214 aa).

The next 3 helical transmembrane spans lie at 48–68 (LGII…ALIL), 141–161 (FLIL…CLGA), and 177–197 (YSSV…LIFV).

This sequence belongs to the DedA family.

The protein resides in the cell membrane. This chain is Alkaline phosphatase-like protein (apl), found in Lactococcus lactis subsp. lactis (strain IL1403) (Streptococcus lactis).